Reading from the N-terminus, the 38-residue chain is uncharacterized protein (38 aa).

This is an uncharacterized protein from Archaeoglobus fulgidus (strain ATCC 49558 / DSM 4304 / JCM 9628 / NBRC 100126 / VC-16).